We begin with the raw amino-acid sequence, 371 residues long: 4-hydroxybenzoate polyprenyltransferase, mitochondrial (371 aa).

A mitochondrion-targeting transit peptide spans 1–45 (MLGSCGAGLVRGLRAETQAWLWGTRGRSLALVHAARGLHAANWQP). Residues 46-83 (SPGQGPRGRPLSLSAAAVVNSAPRPLQPYLRLMRLDKP) are Mitochondrial matrix-facing. The helical transmembrane segment at 84–104 (IGTWLLYLPCTWSIGLAADPG) threads the bilayer. Topologically, residues 105–108 (CLPD) are mitochondrial intermembrane. Residues 109–129 (WYMLSLFGTGAVLMRGAGCTI) traverse the membrane as a helical segment. The Mitochondrial matrix segment spans residues 130-171 (NDMWDRDYDKKVTRTASRPIAAGDISTFRSFVFLGGQLTLAL). Residues 172–192 (GVLLCLNYYSIALGAASLLLV) form a helical membrane-spanning segment. Residues 193-200 (TTYPLMKR) are Mitochondrial intermembrane-facing. Residues 201-221 (ITYWPQLALGLTFNWGALLGW) form a helical membrane-spanning segment. The Mitochondrial matrix portion of the chain corresponds to 222–231 (SAVKGSCDPS). The helical transmembrane segment at 232-252 (VCLPLYFSGIMWTLIYDTIYA) threads the bilayer. At 253–277 (HQDKKDDALIGLKSTALLFREDTKK) the chain is on the mitochondrial intermembrane side. Residues 278-298 (WLSGFSVAMLGALSLVGVNSG) form a helical membrane-spanning segment. The Mitochondrial matrix segment spans residues 299-300 (QT). Residues 301–321 (MPYYTALAAVGAHLAHQIYTL) traverse the membrane as a helical segment. The Mitochondrial intermembrane portion of the chain corresponds to 322 to 332 (DINRPEDCWEK). The helical transmembrane segment at 333 to 353 (FTSNRTIGLIIFLGIVLGNLC) threads the bilayer. Residues 354 to 371 (KAKETDKTRKNIENRMEN) lie on the Mitochondrial matrix side of the membrane.

Belongs to the UbiA prenyltransferase family. Mg(2+) serves as cofactor.

The protein localises to the mitochondrion inner membrane. It catalyses the reaction an all-trans-polyprenyl diphosphate + 4-hydroxybenzoate = a 4-hydroxy-3-(all-trans-polyprenyl)benzoate + diphosphate. The enzyme catalyses all-trans-decaprenyl diphosphate + 4-hydroxybenzoate = 4-hydroxy-3-(all-trans-decaprenyl)benzoate + diphosphate. It carries out the reaction all-trans-nonaprenyl diphosphate + 4-hydroxybenzoate = 4-hydroxy-3-(all-trans-nonaprenyl)benzoate + diphosphate. It participates in cofactor biosynthesis; ubiquinone biosynthesis. Its function is as follows. Mediates the second step in the final reaction sequence of coenzyme Q (CoQ) biosynthesis. Catalyzes the prenylation of para-hydroxybenzoate (PHB) with an all-trans polyprenyl donor (such as all-trans-decaprenyl diphosphate). The length of the polyprenyl side chain varies depending on the species, in humans, the side chain is comprised of 10 isoprenyls (decaprenyl) producing CoQ10 (also known as ubiquinone), whereas rodents predominantly generate CoQ9. However, this specificity is not complete, human tissues have low amounts of CoQ9 and rodent organs contain some CoQ10. Plays a central role in the biosynthesis of CoQ10. CoQ10 is a vital molecule that transports electrons from mitochondrial respiratory chain complexes. CoQs also function as cofactors for uncoupling protein and play a role as regulators of the extracellularly-induced ceramide-dependent apoptotic pathway. Regulates mitochondrial permeability transition pore (mPTP) opening and ROS production (pivotal events in cell death) in a tissue specific manner. This is 4-hydroxybenzoate polyprenyltransferase, mitochondrial from Bos taurus (Bovine).